A 616-amino-acid chain; its full sequence is Chaperone protein HtpG (616 aa).

Positions M1–R334 are a; substrate-binding. Residues E335–R549 form a b region. Positions I550 to N616 are c.

It belongs to the heat shock protein 90 family. Homodimer.

It is found in the cytoplasm. In terms of biological role, molecular chaperone. Has ATPase activity. The protein is Chaperone protein HtpG of Vesicomyosocius okutanii subsp. Calyptogena okutanii (strain HA).